Consider the following 457-residue polypeptide: Siroheme synthase 2 (457 aa).

Residues 1–204 (MDHLPIFCQL…DDEQAVTRIT (204 aa)) form a precorrin-2 dehydrogenase /sirohydrochlorin ferrochelatase region. NAD(+) contacts are provided by residues 22-23 (DV) and 43-44 (LA). A Phosphoserine modification is found at Ser-128. Residues 216–457 (GEVVLVGAGP…RDKLNWFSSK (242 aa)) are uroporphyrinogen-III C-methyltransferase. Position 225 (Pro-225) interacts with S-adenosyl-L-methionine. The Proton acceptor role is filled by Asp-248. Lys-270 (proton donor) is an active-site residue. S-adenosyl-L-methionine contacts are provided by residues 301–303 (GGD), Ile-306, 331–332 (TA), Met-382, and Gly-411.

It in the N-terminal section; belongs to the precorrin-2 dehydrogenase / sirohydrochlorin ferrochelatase family. The protein in the C-terminal section; belongs to the precorrin methyltransferase family.

The catalysed reaction is uroporphyrinogen III + 2 S-adenosyl-L-methionine = precorrin-2 + 2 S-adenosyl-L-homocysteine + H(+). The enzyme catalyses precorrin-2 + NAD(+) = sirohydrochlorin + NADH + 2 H(+). It carries out the reaction siroheme + 2 H(+) = sirohydrochlorin + Fe(2+). It functions in the pathway cofactor biosynthesis; adenosylcobalamin biosynthesis; precorrin-2 from uroporphyrinogen III: step 1/1. It participates in cofactor biosynthesis; adenosylcobalamin biosynthesis; sirohydrochlorin from precorrin-2: step 1/1. The protein operates within porphyrin-containing compound metabolism; siroheme biosynthesis; precorrin-2 from uroporphyrinogen III: step 1/1. Its pathway is porphyrin-containing compound metabolism; siroheme biosynthesis; siroheme from sirohydrochlorin: step 1/1. It functions in the pathway porphyrin-containing compound metabolism; siroheme biosynthesis; sirohydrochlorin from precorrin-2: step 1/1. Multifunctional enzyme that catalyzes the SAM-dependent methylations of uroporphyrinogen III at position C-2 and C-7 to form precorrin-2 via precorrin-1. Then it catalyzes the NAD-dependent ring dehydrogenation of precorrin-2 to yield sirohydrochlorin. Finally, it catalyzes the ferrochelation of sirohydrochlorin to yield siroheme. This chain is Siroheme synthase 2, found in Cronobacter sakazakii (strain ATCC BAA-894) (Enterobacter sakazakii).